The following is a 188-amino-acid chain: Ion-translocating oxidoreductase complex subunit B (188 aa).

Residues 1–23 (MFTAIWVMVGLAIAIGLILGWSA) are hydrophobic. A 4Fe-4S domain is found at 29–88 (EGNPLAEKIDAILPQTQCGQCGFPGCRPYAEAIAKGEADINQCPPGGEEGVKKLAELLGV). 12 residues coordinate [4Fe-4S] cluster: Cys46, Cys49, Cys54, Cys71, Cys113, Cys116, Cys119, Cys123, Cys143, Cys146, Cys149, and Cys153. 2 consecutive 4Fe-4S ferredoxin-type domains span residues 104 to 133 (SVAFIDEQTCIGCTLCIQACPVDAISGAAK) and 134 to 163 (QMHTIIADECTGCELCLAPCPVDCISMVPI).

It belongs to the 4Fe4S bacterial-type ferredoxin family. RnfB subfamily. As to quaternary structure, the complex is composed of six subunits: RnfA, RnfB, RnfC, RnfD, RnfE and RnfG. [4Fe-4S] cluster is required as a cofactor.

It localises to the cell inner membrane. Part of a membrane-bound complex that couples electron transfer with translocation of ions across the membrane. This Thiobacillus denitrificans (strain ATCC 25259 / T1) protein is Ion-translocating oxidoreductase complex subunit B.